A 511-amino-acid chain; its full sequence is Ectonucleoside triphosphate diphosphohydrolase 1 (511 aa).

The Cytoplasmic portion of the chain corresponds to 1–16 (MEDIKDSKVKRFCSKN). Residues 17 to 37 (ILIILGFSSVLAVIALIAVGL) form a helical membrane-spanning segment. Residues 38–478 (THNKPLPENV…LSPPLPHSTY (441 aa)) are Extracellular-facing. The segment at 46–171 (NVKYGIVLDA…DFQGAKIITG (126 aa)) is N-terminal lobe. N-linked (GlcNAc...) asparagine glycosylation occurs at Asn73. A disulfide bridge links Cys84 with Cys108. Glu174 functions as the Proton acceptor in the catalytic mechanism. The segment at 205–441 (QATFGALDLG…GTSWDQIHFM (237 aa)) is C-terminal lobe. Residues Asn226, Asn291, and Asn333 are each glycosylated (N-linked (GlcNAc...) asparagine). Cystine bridges form between Cys254-Cys300 and Cys281-Cys324. Residues Cys337 and Cys342 are joined by a disulfide bond. A glycan (N-linked (GlcNAc...) asparagine) is linked at Asn374. A disulfide bridge links Cys391 with Cys414. Asn429 and Asn458 each carry an N-linked (GlcNAc...) asparagine glycan. The chain crosses the membrane as a helical span at residues 479-499 (ISLMVLFSLVLVAMVITGLFI). The Cytoplasmic portion of the chain corresponds to 500-511 (FSKPSYFWKEAV).

Belongs to the GDA1/CD39 NTPase family. Homodimer; disulfide-linked. Ca(2+) is required as a cofactor. The cofactor is Mg(2+). Post-translationally, N-glycosylated. In terms of processing, the N-terminus is blocked. Palmitoylated on Cys-13; which is required for caveola targeting. In terms of tissue distribution, expressed in primary neurons and astrocytes, kidney, liver, muscle, thymus, lung and spleen.

It localises to the membrane. Its subcellular location is the caveola. It carries out the reaction a ribonucleoside 5'-triphosphate + 2 H2O = a ribonucleoside 5'-phosphate + 2 phosphate + 2 H(+). The enzyme catalyses a ribonucleoside 5'-triphosphate + H2O = a ribonucleoside 5'-diphosphate + phosphate + H(+). It catalyses the reaction a ribonucleoside 5'-diphosphate + H2O = a ribonucleoside 5'-phosphate + phosphate + H(+). The catalysed reaction is ATP + 2 H2O = AMP + 2 phosphate + 2 H(+). It carries out the reaction ATP + H2O = ADP + phosphate + H(+). The enzyme catalyses ADP + H2O = AMP + phosphate + H(+). It catalyses the reaction CTP + 2 H2O = CMP + 2 phosphate + 2 H(+). The catalysed reaction is CTP + H2O = CDP + phosphate + H(+). It carries out the reaction CDP + H2O = CMP + phosphate + H(+). The enzyme catalyses GTP + 2 H2O = GMP + 2 phosphate + 2 H(+). It catalyses the reaction GTP + H2O = GDP + phosphate + H(+). The catalysed reaction is GDP + H2O = GMP + phosphate + H(+). It carries out the reaction ITP + 2 H2O = IMP + 2 phosphate + 2 H(+). The enzyme catalyses ITP + H2O = IDP + phosphate + H(+). It catalyses the reaction IDP + H2O = IMP + phosphate + H(+). The catalysed reaction is UTP + 2 H2O = UMP + 2 phosphate + 2 H(+). It carries out the reaction UTP + H2O = UDP + phosphate + H(+). The enzyme catalyses UDP + H2O = UMP + phosphate + H(+). Catalyzes the hydrolysis of both di- and triphosphate nucleotides (NDPs and NTPs) and hydrolyze NTPs to nucleotide monophosphates (NMPs) in two distinct successive phosphate-releasing steps, with NDPs as intermediates and participates in the regulation of extracellular levels of nucleotides. By hydrolyzing proinflammatory ATP and platelet-activating ADP to AMP, it blocks platelet aggregation and supports blood flow. In Rattus norvegicus (Rat), this protein is Ectonucleoside triphosphate diphosphohydrolase 1.